The primary structure comprises 457 residues: Putative methyltransferase MT1451 (457 aa).

S-adenosyl-L-methionine-binding positions include 276–282 (CAGPGGK), E301, D325, and D341. C394 acts as the Nucleophile in catalysis.

This sequence belongs to the class I-like SAM-binding methyltransferase superfamily. RsmB/NOP family.

Its function is as follows. May act as RNA methyltransferase. The protein is Putative methyltransferase MT1451 of Mycobacterium tuberculosis (strain CDC 1551 / Oshkosh).